The chain runs to 163 residues: GTP-dependent dephospho-CoA kinase (163 aa).

Residues Asp-38, Val-39, Asp-57, Glu-115, and Asp-138 each contribute to the GTP site.

This sequence belongs to the GTP-dependent DPCK family.

The catalysed reaction is 3'-dephospho-CoA + GTP = GDP + CoA + H(+). Its pathway is cofactor biosynthesis; coenzyme A biosynthesis. Its function is as follows. Catalyzes the GTP-dependent phosphorylation of the 3'-hydroxyl group of dephosphocoenzyme A to form coenzyme A (CoA). In Methanothermobacter thermautotrophicus (strain ATCC 29096 / DSM 1053 / JCM 10044 / NBRC 100330 / Delta H) (Methanobacterium thermoautotrophicum), this protein is GTP-dependent dephospho-CoA kinase.